The following is a 197-amino-acid chain: dITP/XTP pyrophosphatase (197 aa).

8 to 13 (TKNKGK) lines the substrate pocket. The Mg(2+) site is built by Glu42 and Asp71. Catalysis depends on Asp71, which acts as the Proton acceptor. Substrate is bound by residues Ser72, 154–157 (FGYD), Lys177, and 182–183 (HR).

Belongs to the HAM1 NTPase family. As to quaternary structure, homodimer. It depends on Mg(2+) as a cofactor.

It catalyses the reaction XTP + H2O = XMP + diphosphate + H(+). It carries out the reaction dITP + H2O = dIMP + diphosphate + H(+). The enzyme catalyses ITP + H2O = IMP + diphosphate + H(+). In terms of biological role, pyrophosphatase that catalyzes the hydrolysis of nucleoside triphosphates to their monophosphate derivatives, with a high preference for the non-canonical purine nucleotides XTP (xanthosine triphosphate), dITP (deoxyinosine triphosphate) and ITP. Seems to function as a house-cleaning enzyme that removes non-canonical purine nucleotides from the nucleotide pool, thus preventing their incorporation into DNA/RNA and avoiding chromosomal lesions. The protein is dITP/XTP pyrophosphatase of Oceanobacillus iheyensis (strain DSM 14371 / CIP 107618 / JCM 11309 / KCTC 3954 / HTE831).